A 287-amino-acid polypeptide reads, in one-letter code: Bifunctional protein FolD (287 aa).

NADP(+) is bound by residues 166 to 168 (GAS), serine 191, and isoleucine 232.

It belongs to the tetrahydrofolate dehydrogenase/cyclohydrolase family. As to quaternary structure, homodimer.

The catalysed reaction is (6R)-5,10-methylene-5,6,7,8-tetrahydrofolate + NADP(+) = (6R)-5,10-methenyltetrahydrofolate + NADPH. The enzyme catalyses (6R)-5,10-methenyltetrahydrofolate + H2O = (6R)-10-formyltetrahydrofolate + H(+). It participates in one-carbon metabolism; tetrahydrofolate interconversion. Its function is as follows. Catalyzes the oxidation of 5,10-methylenetetrahydrofolate to 5,10-methenyltetrahydrofolate and then the hydrolysis of 5,10-methenyltetrahydrofolate to 10-formyltetrahydrofolate. The protein is Bifunctional protein FolD of Haemophilus ducreyi (strain 35000HP / ATCC 700724).